Consider the following 847-residue polypeptide: MSDTTTGSDAADAAVPATTPADLEAASARVDELRAEIERHRDAYYGETGGTVSDAEYDALERELRAIEDAHPTLRSQDSPTQTVGGRAETTLFAPVTHAERMLSLDNVFSEEELAEWAAKVERDAGRGRVRYLSELKIDGLAINLRYEHGVLVTAATRGDGVVGEDVTQNVLTMGTVPERLAGSGHPPLVEVRGEIFFPVAEFDELNARQLEVGERVFANPRNAAAGSLRQKEEGKSPARLELMHARIRRLRMLVHGIGAWPVRELERDAHVSAQSEVYGLLEAWGLPISTHFRVFDDIAEVAGFVRRQGADRAAVEHQIDGIVVKVDDLGLHEELGATSRAPRWATAYKYPPEEVNTTLLDIVVSVGRTGRATPFAVMEKVEVAGSEVRQATLHNQQVVKAKGVLIGDTVVLRKAGDVIPEVLGPVVELRTGKEHEFVMPTLCPECQTPLKPAKEGDIDLRCPNARSCPAQVRGRVEHVASRGALDIEGLGEVAAAALTQPLEPEDPPLETEAGLFELTMADLVPITVVVRDAETGMVKVDEKTGEAKRVTPFRRKRVLKRDGAFDPAEPWGDEASVPSKSAEVLLENLEKAKTQDLWRILVALSIRHVGPVAARALAGWFGSLDVIRAASREELAAVDGVGGIIADALLDWFEVDWHREIVARWEKAGVVTAVPGHPGPGAAAAAGGVLAGLAVVATGSLEGYTREGALEAIMAAGGKAGSSVSKKTHYVAAGPGAGSKLGKAEALGVRIIDAAEFRLLVEQGPDAIALPEADPVPDAAETAPDGGSAEDATAATAGAAEAATAEAKPKRARKRKAPAAAAAAPPTDVEAGTAVHAEPDGPAETP.

Residues 1 to 22 (MSDTTTGSDAADAAVPATTPAD) show a composition bias toward low complexity. Residues 1–23 (MSDTTTGSDAADAAVPATTPADL) are disordered. NAD(+)-binding positions include 54–58 (DAEYD), 104–105 (SL), and glutamate 135. Lysine 137 serves as the catalytic N6-AMP-lysine intermediate. The NAD(+) site is built by arginine 158, glutamate 195, lysine 326, and lysine 350. Residues cysteine 444, cysteine 447, cysteine 463, and cysteine 469 each contribute to the Zn(2+) site. Residues 686–775 (AAGGVLAGLA…PDAIALPEAD (90 aa)) form the BRCT domain. The segment at 770–847 (ALPEADPVPD…AEPDGPAETP (78 aa)) is disordered. Composition is skewed to low complexity over residues 786–807 (DGGSAEDATAATAGAAEAATAE) and 819–833 (PAAAAAAPPTDVEAG).

Belongs to the NAD-dependent DNA ligase family. LigA subfamily. The cofactor is Mg(2+). Mn(2+) is required as a cofactor.

It catalyses the reaction NAD(+) + (deoxyribonucleotide)n-3'-hydroxyl + 5'-phospho-(deoxyribonucleotide)m = (deoxyribonucleotide)n+m + AMP + beta-nicotinamide D-nucleotide.. DNA ligase that catalyzes the formation of phosphodiester linkages between 5'-phosphoryl and 3'-hydroxyl groups in double-stranded DNA using NAD as a coenzyme and as the energy source for the reaction. It is essential for DNA replication and repair of damaged DNA. The protein is DNA ligase of Clavibacter sepedonicus (Clavibacter michiganensis subsp. sepedonicus).